Consider the following 664-residue polypeptide: UvrABC system protein C (664 aa).

A GIY-YIG domain is found at 63 to 141 (LRPGVYRMYD…IKRYRPPYNI (79 aa)). The 36-residue stretch at 254–289 (THVQKKLVTAMEQASNDLNYELAAVYRDRLKALAFI) folds into the UVR domain.

This sequence belongs to the UvrC family. As to quaternary structure, interacts with UvrB in an incision complex.

It localises to the cytoplasm. Functionally, the UvrABC repair system catalyzes the recognition and processing of DNA lesions. UvrC both incises the 5' and 3' sides of the lesion. The N-terminal half is responsible for the 3' incision and the C-terminal half is responsible for the 5' incision. The sequence is that of UvrABC system protein C from Zymomonas mobilis subsp. mobilis (strain ATCC 31821 / ZM4 / CP4).